The primary structure comprises 1002 residues: Collagen alpha-2(I) chain (1002 aa).

The tract at residues serine 1–serine 1002 is disordered. A 4-hydroxyproline mark is found at proline 10, proline 13, proline 28, and proline 34. Residues glycine 17 to proline 60 are compositionally biased toward low complexity. A 5-hydroxylysine; alternate modification is found at lysine 89. O-linked (Gal...) hydroxylysine; alternate glycosylation occurs at lysine 89. 2 stretches are compositionally biased toward low complexity: residues serine 145 to proline 166 and proline 211 to proline 232. Residues glycine 266 to glycine 275 show a composition bias toward gly residues. Residues serine 276–serine 286 show a composition bias toward low complexity. A compositionally biased stretch (gly residues) spans glycine 308 to glycine 317. The segment covering proline 330–serine 346 has biased composition (low complexity). 4-hydroxyproline is present on residues proline 352 and proline 355. Positions leucine 381–alanine 400 are enriched in low complexity. Positions glycine 449 to glycine 458 are enriched in gly residues. Low complexity-rich tracts occupy residues proline 505 to proline 522 and glutamate 534 to alanine 544. The segment covering glycine 545 to glycine 554 has biased composition (gly residues). Low complexity-rich tracts occupy residues valine 577 to serine 621 and valine 628 to alanine 648. Residues lysine 649–lysine 658 are compositionally biased toward basic and acidic residues. Low complexity predominate over residues proline 666–alanine 676. Residues glycine 686–glycine 695 show a composition bias toward gly residues. Residues threonine 697–threonine 706 show a composition bias toward low complexity. Residues glycine 743–glycine 752 are compositionally biased toward gly residues. Low complexity-rich tracts occupy residues serine 760 to proline 787 and leucine 795 to proline 805. Gly residues predominate over residues glycine 806–glycine 828. Residues alanine 833 to arginine 851 are compositionally biased toward basic and acidic residues. Residues tyrosine 853–proline 898 are compositionally biased toward low complexity. Positions arginine 908–proline 919 are enriched in basic and acidic residues. The segment covering serine 987–serine 1002 has biased composition (pro residues).

The protein belongs to the fibrillar collagen family. In terms of assembly, trimers of one alpha 2(I) and two alpha 1(I) chains. Interacts (via C-terminus) with TMEM131 (via PapD-L domain); the interaction is direct and is involved in assembly and TRAPPIII ER-to-Golgi transport complex-dependent secretion of collagen. Post-translationally, prolines at the third position of the tripeptide repeating unit (G-X-Y) are hydroxylated in some or all of the chains. Expressed in bones.

Its subcellular location is the secreted. It is found in the extracellular space. The protein localises to the extracellular matrix. Its function is as follows. Type I collagen is a member of group I collagen (fibrillar forming collagen). The sequence is that of Collagen alpha-2(I) chain from Glossotherium robustum (Ground sloth).